We begin with the raw amino-acid sequence, 475 residues long: UDP-N-acetylmuramate--L-alanine ligase (475 aa).

117-123 (GTHGKTT) serves as a coordination point for ATP.

Belongs to the MurCDEF family.

It is found in the cytoplasm. The catalysed reaction is UDP-N-acetyl-alpha-D-muramate + L-alanine + ATP = UDP-N-acetyl-alpha-D-muramoyl-L-alanine + ADP + phosphate + H(+). It functions in the pathway cell wall biogenesis; peptidoglycan biosynthesis. Its function is as follows. Cell wall formation. This Chlorobaculum tepidum (strain ATCC 49652 / DSM 12025 / NBRC 103806 / TLS) (Chlorobium tepidum) protein is UDP-N-acetylmuramate--L-alanine ligase.